The chain runs to 1462 residues: Trifunctional nucleotide phosphoesterase protein YfkN (1462 aa).

An N-terminal signal peptide occupies residues 1–35; it reads MRIQKRRTHVENILRILLPPIMILSLILPTPPIHA. The 2',3'-cyclic nucleotide 2'-phosphodiesterase/3'-nucleotidase stretch occupies residues 36 to 623; that stretch reads EESAAPQVHL…GTNLTFESSL (588 aa). The a divalent metal cation site is built by D52, H54, D97, N141, H249, H282, and H284. A ribonucleoside 3'-phosphate is bound by residues Y458 and 561-567; that span reads YRASGGG. The tract at residues 624-1427 is 5'-nucleotidase; that stretch reads LAKPFADKAD…GPAGGLLPDT (804 aa). The a divalent metal cation site is built by D676, H678, D708, N740, H872, H895, and H897. Residues F1047 and 1127–1133 each bind a ribonucleoside 5'-phosphate; that span reads FVGAGGD. The disordered stretch occupies residues 1350 to 1422; the sequence is ILNSGSNNKP…GSGTDGPAGG (73 aa). Residues 1405-1421 are compositionally biased toward gly residues; the sequence is GSGGNGSGGSGTDGPAG. The LPXTG sorting signal signature appears at 1424–1428; it reads LPDTA. At T1427 the chain carries Pentaglycyl murein peptidoglycan amidated threonine. The propeptide at 1428-1462 is removed by sortase; that stretch reads ATSMYSILLAGFLISALGTAMYLHQRRKQNRANQA.

The protein belongs to the 5'-nucleotidase family. A divalent metal cation is required as a cofactor.

The protein resides in the secreted. It is found in the cell wall. It carries out the reaction a nucleoside 2',3'-cyclic phosphate + H2O = a nucleoside 3'-phosphate + H(+). It catalyses the reaction a ribonucleoside 3'-phosphate + H2O = a ribonucleoside + phosphate. The enzyme catalyses a ribonucleoside 5'-phosphate + H2O = a ribonucleoside + phosphate. Functionally, catalyzes the release of inorganic phosphate from 2',3'-cyclic nucleotides through consecutive 2',3'-phosphodiesterase and 3'- (or 2') nucleotidase activities. Also possesses a 5'-nucleotidase activity. Does not catalyze the release of inorganic phosphate from 3',5'-cyclic nucleotides. Probably plays a role in the cellular reprocessing of nucleotides present in the medium, under conditions of phosphate shortage. This chain is Trifunctional nucleotide phosphoesterase protein YfkN (yfkN), found in Bacillus subtilis (strain 168).